A 727-amino-acid chain; its full sequence is MPKNSKVTQREHSSEHVTESVADLLALEEPVDYKQSVLNVAGEAGGKQKAVEEELDAEDRPAWNSKLQYILAQIGFSVGLGNIWRFPYLCQKNGGGAYLVPYLVLLIIIGIPLFFLELAVGQRIRRGSIGVWHYICPRLGGIGFSSCIVCLFVGLYYNVIIGWSIFYFFKSFQYPLPWSECPVVRNGSVAVVEAECEKSSATTYFWYREALDISDSISESGGLNWKMTLCLLVAWSIVGMAVVKGIQSSGKVMYFSSLFPYVVLACFLVRGLLLRGAVDGILHMFTPKLDKMLDPQVWREAATQVFFALGLGFGGVIAFSSYNKQDNNCHFDAALVSFINFFTSVLATLVVFAVLGFKANIMNEKCVVENAEKILGYLNTNVLSRDLIPPHVNFSHLTTKDYMEMYNVIMTVKEDQFSALGLDPCLLEDELDKSVQGTGLAFIAFTEAMTHFPASPFWSVMFFLMLINLGLGSMIGTMAGITTPIIDTFKVPKEMFTVGCCVFAFLVGLLFVQRSGNYFVTMFDDYSATLPLTLIVILENIAVAWIYGTKKFMQELTEMLGFRPYRFYFYMWKFVSPLCMAVLTTASIIQLGVTPPGYSAWIKEEAAERYLYFPNWAMALLITLIVVATLPIPVVFVLRHFHLLSDGSNTLSVSYKKGRMMKDISNLEENDETRFILSKVPSEAPSPMPTHRSYLGPGSTSPLETSGNPNGRYGSGYLLASTPESEL.

Topologically, residues 1 to 69 (MPKNSKVTQR…RPAWNSKLQY (69 aa)) are cytoplasmic. Phosphoserine occurs at positions 13 and 20. Residues 70 to 90 (ILAQIGFSVGLGNIWRFPYLC) traverse the membrane as a helical segment. At 91-95 (QKNGG) the chain is on the extracellular side. A helical membrane pass occupies residues 96–116 (GAYLVPYLVLLIIIGIPLFFL). Residues 117–147 (ELAVGQRIRRGSIGVWHYICPRLGGIGFSSC) are Cytoplasmic-facing. Residues 148–168 (IVCLFVGLYYNVIIGWSIFYF) form a helical membrane-spanning segment. The Extracellular portion of the chain corresponds to 169–222 (FKSFQYPLPWSECPVVRNGSVAVVEAECEKSSATTYFWYREALDISDSISESGG). N186 carries an N-linked (GlcNAc...) asparagine glycan. Residues 223-243 (LNWKMTLCLLVAWSIVGMAVV) form a helical membrane-spanning segment. Topologically, residues 244-253 (KGIQSSGKVM) are cytoplasmic. A helical transmembrane segment spans residues 254–274 (YFSSLFPYVVLACFLVRGLLL). Residues 275–300 (RGAVDGILHMFTPKLDKMLDPQVWRE) are Extracellular-facing. A helical membrane pass occupies residues 301–321 (AATQVFFALGLGFGGVIAFSS). Residues 322–334 (YNKQDNNCHFDAA) lie on the Cytoplasmic side of the membrane. Residues 335 to 355 (LVSFINFFTSVLATLVVFAVL) traverse the membrane as a helical segment. At 356–460 (GFKANIMNEK…HFPASPFWSV (105 aa)) the chain is on the extracellular side. Y377 carries the phosphotyrosine modification. N393 is a glycosylation site (N-linked (GlcNAc...) asparagine). The chain crosses the membrane as a helical span at residues 461–481 (MFFLMLINLGLGSMIGTMAGI). Residues 482 to 490 (TTPIIDTFK) are Cytoplasmic-facing. Residues 491–511 (VPKEMFTVGCCVFAFLVGLLF) form a helical membrane-spanning segment. Residues 512 to 527 (VQRSGNYFVTMFDDYS) lie on the Extracellular side of the membrane. Residues 528–548 (ATLPLTLIVILENIAVAWIYG) traverse the membrane as a helical segment. Topologically, residues 549-573 (TKKFMQELTEMLGFRPYRFYFYMWK) are cytoplasmic. Residues 574–594 (FVSPLCMAVLTTASIIQLGVT) traverse the membrane as a helical segment. Residues 595 to 617 (PPGYSAWIKEEAAERYLYFPNWA) are Extracellular-facing. Residues 618–638 (MALLITLIVVATLPIPVVFVL) traverse the membrane as a helical segment. The Cytoplasmic portion of the chain corresponds to 639-727 (RHFHLLSDGS…LLASTPESEL (89 aa)). 2 positions are modified to phosphoserine: S665 and S701. A disordered region spans residues 680–727 (VPSEAPSPMPTHRSYLGPGSTSPLETSGNPNGRYGSGYLLASTPESEL). The span at 698-709 (GSTSPLETSGNP) shows a compositional bias: polar residues.

This sequence belongs to the sodium:neurotransmitter symporter (SNF) (TC 2.A.22) family.

It is found in the cytoplasmic vesicle. The protein localises to the secretory vesicle. The protein resides in the synaptic vesicle membrane. Its subcellular location is the postsynapse. It localises to the presynapse. It carries out the reaction L-proline(in) + Na(+)(in) = L-proline(out) + Na(+)(out). The catalysed reaction is L-leucine(in) + Na(+)(in) = L-leucine(out) + Na(+)(out). It catalyses the reaction glycine(in) + Na(+)(in) = glycine(out) + Na(+)(out). The enzyme catalyses L-alanine(in) + Na(+)(in) = L-alanine(out) + Na(+)(out). It carries out the reaction L-glutamine(in) + Na(+)(in) = L-glutamine(out) + Na(+)(out). Its function is as follows. Synaptic vesicle transporter with apparent selectivity for neutral amino acids. The transport is sodium-coupled but chloride-independent, likely driven by the proton electrochemical gradient generated by vacuolar H(+)-ATPase in an overall electrogenic mechanism. May contribute to the synaptic uptake of neurotransmitter precursors in a process coupled in part to vesicle exocytosis. The sequence is that of Sodium-dependent neutral amino acid transporter SLC6A17 from Homo sapiens (Human).